The sequence spans 181 residues: Adenine phosphoribosyltransferase (181 aa).

This sequence belongs to the purine/pyrimidine phosphoribosyltransferase family. In terms of assembly, homodimer.

The protein resides in the cytoplasm. It carries out the reaction AMP + diphosphate = 5-phospho-alpha-D-ribose 1-diphosphate + adenine. Its pathway is purine metabolism; AMP biosynthesis via salvage pathway; AMP from adenine: step 1/1. In terms of biological role, catalyzes a salvage reaction resulting in the formation of AMP, that is energically less costly than de novo synthesis. The sequence is that of Adenine phosphoribosyltransferase from Methylobacterium sp. (strain 4-46).